The following is a 513-amino-acid chain: ATP synthase subunit alpha (513 aa).

169–176 provides a ligand contact to ATP; the sequence is GDRQTGKT.

It belongs to the ATPase alpha/beta chains family. As to quaternary structure, F-type ATPases have 2 components, CF(1) - the catalytic core - and CF(0) - the membrane proton channel. CF(1) has five subunits: alpha(3), beta(3), gamma(1), delta(1), epsilon(1). CF(0) has three main subunits: a(1), b(2) and c(9-12). The alpha and beta chains form an alternating ring which encloses part of the gamma chain. CF(1) is attached to CF(0) by a central stalk formed by the gamma and epsilon chains, while a peripheral stalk is formed by the delta and b chains.

The protein resides in the cell inner membrane. The catalysed reaction is ATP + H2O + 4 H(+)(in) = ADP + phosphate + 5 H(+)(out). Its function is as follows. Produces ATP from ADP in the presence of a proton gradient across the membrane. The alpha chain is a regulatory subunit. The protein is ATP synthase subunit alpha of Dichelobacter nodosus (strain VCS1703A).